The sequence spans 323 residues: Putative HTH-type transcriptional regulatory protein Hlac_0273 (323 aa).

The 58-residue stretch at Leu132–Leu189 folds into the HTH cro/C1-type domain. A DNA-binding region (H-T-H motif) is located at residues Leu143–Asp162. The tract at residues Val188 to Asp211 is disordered.

The sequence is that of Putative HTH-type transcriptional regulatory protein Hlac_0273 from Halorubrum lacusprofundi (strain ATCC 49239 / DSM 5036 / JCM 8891 / ACAM 34).